A 119-amino-acid polypeptide reads, in one-letter code: MARVKGGVVSRKRRKRVLKLAKGYYGAKHILFRTAKEQVMNSYYYAYRDRRQKKRDFRKLWITRINAAARLNGLSYSQLMHGLKLAEIEVNRKMLADLAVNDAAAFTALADAAKAKLGK.

It belongs to the bacterial ribosomal protein bL20 family.

Functionally, binds directly to 23S ribosomal RNA and is necessary for the in vitro assembly process of the 50S ribosomal subunit. It is not involved in the protein synthesizing functions of that subunit. The protein is Large ribosomal subunit protein bL20 of Streptococcus thermophilus (strain ATCC BAA-491 / LMD-9).